The sequence spans 103 residues: uncharacterized protein (103 aa).

The disordered stretch occupies residues 1–103 (MAGARRRARC…WRGGSCTSQR (103 aa)). Composition is skewed to basic residues over residues 55–65 (RRPGPGRRARS) and 74–84 (RPPHSRTRARR).

Belongs to the epstein-barr virus RPMS1 family.

This is an uncharacterized protein from Epstein-Barr virus (strain GD1) (HHV-4).